A 285-amino-acid chain; its full sequence is Acetyl-coenzyme A carboxylase carboxyl transferase subunit beta (285 aa).

The 257-residue stretch at 29-285 (IMTKCPKCKK…ILKIHQEVTK (257 aa)) folds into the CoA carboxyltransferase N-terminal domain. Zn(2+)-binding residues include Cys33, Cys36, Cys52, and Cys55. A C4-type zinc finger spans residues 33-55 (CPKCKKIMYTKELAENLNVCFNC).

This sequence belongs to the AccD/PCCB family. As to quaternary structure, acetyl-CoA carboxylase is a heterohexamer composed of biotin carboxyl carrier protein (AccB), biotin carboxylase (AccC) and two subunits each of ACCase subunit alpha (AccA) and ACCase subunit beta (AccD). The cofactor is Zn(2+).

It localises to the cytoplasm. The enzyme catalyses N(6)-carboxybiotinyl-L-lysyl-[protein] + acetyl-CoA = N(6)-biotinyl-L-lysyl-[protein] + malonyl-CoA. It participates in lipid metabolism; malonyl-CoA biosynthesis; malonyl-CoA from acetyl-CoA: step 1/1. In terms of biological role, component of the acetyl coenzyme A carboxylase (ACC) complex. Biotin carboxylase (BC) catalyzes the carboxylation of biotin on its carrier protein (BCCP) and then the CO(2) group is transferred by the transcarboxylase to acetyl-CoA to form malonyl-CoA. This Staphylococcus aureus (strain Mu3 / ATCC 700698) protein is Acetyl-coenzyme A carboxylase carboxyl transferase subunit beta.